A 346-amino-acid chain; its full sequence is Inositol 2-dehydrogenase (346 aa).

The protein belongs to the Gfo/Idh/MocA family. Homotetramer.

It catalyses the reaction myo-inositol + NAD(+) = scyllo-inosose + NADH + H(+). In terms of biological role, involved in the oxidation of myo-inositol (MI) to 2-keto-myo-inositol (2KMI or 2-inosose). The polypeptide is Inositol 2-dehydrogenase (Rhodococcus erythropolis (strain PR4 / NBRC 100887)).